Reading from the N-terminus, the 998-residue chain is Collagen alpha-1(I) chain (998 aa).

The interval 1–998 is disordered; that stretch reads GGVSVPGPMG…PGPPGPPGPP (998 aa). 4-hydroxyproline is present on residues Pro18, Pro21, Pro24, Pro33, Pro48, Pro63, Pro69, Pro78, and Pro84. The segment covering 26-39 has biased composition (low complexity); it reads PQGFQGPPGSSGPM. Over residues 51 to 65 the composition is skewed to basic and acidic residues; that stretch reads NGDDGEAGKPGRPGE. Lys87 carries the post-translational modification 5-hydroxylysine; alternate. An O-linked (Gal...) hydroxylysine; alternate glycan is attached at Lys87. Residue Ser93 is modified to Phosphoserine. The span at 101-115 shows a compositional bias: low complexity; that stretch reads DAGPAGPKQMGPRGL. Residues Pro116, Pro122, Pro143, Pro152, Pro155, Pro182, Pro185, Pro197, Pro203, Pro212, Pro218, Pro221, and Pro236 each carry the 4-hydroxyproline modification. Positions 122-140 are enriched in low complexity; the sequence is PGASGPAGARGNDGATGAA. Pro residues predominate over residues 142-154; sequence PPGPTGPAGPPGF. The span at 188-238 shows a compositional bias: low complexity; it reads AGAAGPAGNPGADGQPGAKGANGAPGIAGAPGFPGARGPSGPQGPSGAPGP. Lys239 is modified (5-hydroxylysine). Pro245, Pro248, Pro260, Pro269, Pro284, Pro290, Pro299, and Pro305 each carry 4-hydroxyproline. Residues 294 to 303 are compositionally biased toward gly residues; it reads GERGGPGSRG. Residue Lys314 is modified to 5-hydroxylysine. Residues Pro323, Pro332, Pro338, Pro344, Pro353, Pro356, Pro365, Pro374, Pro380, Pro392, Pro401, Pro410, Pro413, Pro431, Pro449, Pro455, Pro461, Pro467, Pro473, Pro479, Pro491, Pro500, Pro511, Pro523, Pro526, Pro532, Pro538, and Pro547 each carry the 4-hydroxyproline modification. A compositionally biased stretch (low complexity) spans 347 to 401; it reads KGLTGSPGSPGPDGKTGPPGPAGQDGRPGPAGPPGARGQAGVMGFPGPKGAAGEP. Over residues 443–470 the composition is skewed to low complexity; the sequence is QGPAGSPGFQGLPGPAGPPGEAGKPGEQ. Over residues 513 to 535 the composition is skewed to low complexity; it reads NDGAKGDAGAPGAPGSQGAPGLQ. Lys559 bears the 5-hydroxylysine mark. Residues Pro565 and Pro580 each carry the 4-hydroxyproline modification. Over residues 592 to 606 the composition is skewed to low complexity; it reads TGPSGPAGPTGARGA. Ser595 is modified (phosphoserine). 4-hydroxyproline is present on residues Pro607, Pro613, Pro616, Pro625, Pro631, Pro649, Pro658, and Pro667. Positions 619-646 are enriched in low complexity; it reads AGFAGPPGADGQPGAKGEPGDAGAKGDA. The segment covering 648-660 has biased composition (pro residues); sequence PPGPAGPTGPPGP. The residue at position 670 (Lys670) is a 5-hydroxylysine. Low complexity predominate over residues 675–691; that stretch reads SAGPPGATGFPGAAGRV. 2 positions are modified to 4-hydroxyproline: Pro679 and Pro685. Residue Pro693 is modified to 3-hydroxyproline. Pro694, Pro703, Pro706, Pro727, Pro736, Pro744, Pro753, Pro771, Pro780, Pro783, Pro789, Pro804, Pro810, Pro816, Pro825, and Pro831 each carry 4-hydroxyproline. A compositionally biased stretch (low complexity) spans 720–729; the sequence is ETGPAGRPGE. The span at 741–762 shows a compositional bias: low complexity; it reads KGSPGADGPAGAPGTPGPQGIA. A compositionally biased stretch (pro residues) spans 803–813; that stretch reads PPGPMGPPGLA. Residues 815-830 are compositionally biased toward low complexity; sequence PPGEAGREGSPGAEGS. A 5-hydroxylysine modification is found at Lys840. Pro residues predominate over residues 848–863; that stretch reads PGPPGAPGAPGAPGPV. Pro851, Pro854, and Pro857 each carry 4-hydroxyproline. Residues 884–898 show a composition bias toward low complexity; it reads AGPAGARGPAGPQGP. A compositionally biased stretch (basic and acidic residues) spans 899–913; it reads RGDKGETGEQGDRGI. Lys902 is subject to 5-hydroxylysine. Position 914 is a 5-hydroxylysine; alternate (Lys914). Lys914 carries an O-linked (Gal...) hydroxylysine; alternate glycan. 4-hydroxyproline occurs at positions 929, 932, 950, and 965. Positions 932 to 965 are enriched in low complexity; sequence PGEQGPSGASGPAGPRGPPGSAGTPGKDGLNGLP. At Pro970 the chain carries 3-hydroxyproline. A 4-hydroxyproline modification is found at Pro971. Pro residues predominate over residues 983-998; that stretch reads VGPPGPPGPPGPPGPP. Pro985 bears the 3-hydroxyproline mark. The residue at position 986 (Pro986) is a 4-hydroxyproline. Pro988 is modified (3-hydroxyproline). Residue Pro989 is modified to 4-hydroxyproline. Pro991 bears the 3-hydroxyproline mark. A 4-hydroxyproline mark is found at Pro992, Pro995, and Pro998.

It belongs to the fibrillar collagen family. Trimers of one alpha 2(I) and two alpha 1(I) chains. In terms of processing, contains mostly 4-hydroxyproline. Proline residues at the third position of the tripeptide repeating unit (G-X-Y) are hydroxylated in some or all of the chains. Post-translationally, contains 3-hydroxyproline at a few sites. This modification occurs on the first proline residue in the sequence motif Gly-Pro-Hyp, where Hyp is 4-hydroxyproline. Lysine residues at the third position of the tripeptide repeating unit (G-X-Y) are 5-hydroxylated in some or all of the chains. In terms of processing, O-glycosylated on hydroxylated lysine residues. The O-linked glycan consists of a Glc-Gal disaccharide. Expressed in bones.

The protein localises to the secreted. The protein resides in the extracellular space. It is found in the extracellular matrix. Functionally, type I collagen is a member of group I collagen (fibrillar forming collagen). The protein is Collagen alpha-1(I) chain of Glyptodon sp. (strain SLP-2019) (Giant armadillo).